Consider the following 174-residue polypeptide: V-type proton ATPase catalytic subunit A (174 aa).

The protein belongs to the ATPase alpha/beta chains family. V-ATPase is a heteromultimeric enzyme made up of two complexes: the ATP-hydrolytic V1 complex and the proton translocation V0 complex. The V1 complex consists of three catalytic AB heterodimers that form a heterohexamer, three peripheral stalks each consisting of EG heterodimers, one central rotor including subunits D and F, and the regulatory subunits C and H. The proton translocation complex V0 consists of the proton transport subunit a, a ring of proteolipid subunits c9c'', rotary subunit d, subunits e and f, and the accessory subunits ATP6AP1/Ac45 and ATP6AP2/PRR. Interacts with the V0 complex V-ATPase subunit a4 ATP6V0A4. Interacts with WFS1. Interacts with alpha-crystallin B chain/CRYAB and with MTOR, forming a ternary complex.

The protein resides in the cytoplasm. Its subcellular location is the cytosol. It localises to the cytoplasmic vesicle. The protein localises to the secretory vesicle. It is found in the clathrin-coated vesicle membrane. The protein resides in the lysosome. It catalyses the reaction ATP + H2O + 4 H(+)(in) = ADP + phosphate + 5 H(+)(out). ATP hydrolysis occurs at the interface between the nucleotide-binding domains of subunits A and B. ATP hydrolysis triggers a conformational change in the subunits D and F, which induces a shift of subunit d. The c-ring is subsequently rotated and results in a continuous proton translocation across the membrane. In terms of biological role, catalytic subunit of the V1 complex of vacuolar(H+)-ATPase (V-ATPase), a multisubunit enzyme composed of a peripheral complex (V1) that hydrolyzes ATP and a membrane integral complex (V0) that translocates protons. V-ATPase is responsible for acidifying and maintaining the pH of intracellular compartments and in some cell types, is targeted to the plasma membrane, where it is responsible for acidifying the extracellular environment. In aerobic conditions, involved in intracellular iron homeostasis, thus triggering the activity of Fe(2+) prolyl hydroxylase (PHD) enzymes, and leading to HIF1A hydroxylation and subsequent proteasomal degradation. May play a role in neurite development and synaptic connectivity. The chain is V-type proton ATPase catalytic subunit A from Mesocricetus auratus (Golden hamster).